The sequence spans 629 residues: Smc-like protein Sph1 (629 aa).

Coiled-coil stretches lie at residues Leu139–Asp282 and Ala318–Asp487.

This sequence belongs to the Sph1/Sph2 family.

It localises to the cytoplasm. In terms of biological role, may play a role in a late step of replication. The polypeptide is Smc-like protein Sph1 (sph1) (Halobacterium salinarum (strain ATCC 29341 / DSM 671 / R1)).